The chain runs to 162 residues: Ribosome maturation factor RimM (162 aa).

One can recognise a PRC barrel domain in the interval 86–160 (EGRYYYFALI…SIHVDPIPGL (75 aa)).

The protein belongs to the RimM family. Binds ribosomal protein uS19.

Its subcellular location is the cytoplasm. Functionally, an accessory protein needed during the final step in the assembly of 30S ribosomal subunit, possibly for assembly of the head region. Essential for efficient processing of 16S rRNA. May be needed both before and after RbfA during the maturation of 16S rRNA. It has affinity for free ribosomal 30S subunits but not for 70S ribosomes. The polypeptide is Ribosome maturation factor RimM (Thermus thermophilus (strain ATCC 27634 / DSM 579 / HB8)).